Consider the following 157-residue polypeptide: Probable succinate transporter subunit YjjB (157 aa).

4 helical membrane passes run 8–28, 50–70, 87–107, and 129–149; these read LALA…AMVF, MILM…SMLG, VFTV…TAMI, and FLTA…PGLW.

It belongs to the ThrE exporter (TC 2.A.79) family. In terms of assembly, the transporter is composed of YjjB and YjjP.

It localises to the cell inner membrane. Involved in succinate export with YjjP. Both proteins are required for export. The sequence is that of Probable succinate transporter subunit YjjB from Escherichia coli O157:H7 (strain EC4115 / EHEC).